Consider the following 95-residue polypeptide: Large ribosomal subunit protein uL23cz/uL23cy (95 aa).

It belongs to the universal ribosomal protein uL23 family. In terms of assembly, part of the 50S ribosomal subunit.

It is found in the plastid. The protein resides in the chloroplast. Binds to 23S rRNA. The sequence is that of Large ribosomal subunit protein uL23cz/uL23cy (rpl23-A) from Amborella trichopoda.